The following is a 202-amino-acid chain: uncharacterized protein (202 aa).

The GST N-terminal domain occupies 1 to 78 (MKLVGSYTSP…YIELMNVAPA (78 aa)). Residues Ser-9, Val-49, and 62 to 63 (DS) contribute to the glutathione site. The region spanning 83-202 (DPLESLRVRK…SFARTEPPKA (120 aa)) is the GST C-terminal domain.

The protein belongs to the GST superfamily. HSP26 family.

Glutathione (GSH) transferase homolog, that might be involved in selenium metabolism. This is an uncharacterized protein from Escherichia coli (strain K12).